We begin with the raw amino-acid sequence, 223 residues long: Urease accessory protein UreF (223 aa).

It belongs to the UreF family. As to quaternary structure, ureD, UreF and UreG form a complex that acts as a GTP-hydrolysis-dependent molecular chaperone, activating the urease apoprotein by helping to assemble the nickel containing metallocenter of UreC. The UreE protein probably delivers the nickel.

Its subcellular location is the cytoplasm. Functionally, required for maturation of urease via the functional incorporation of the urease nickel metallocenter. This chain is Urease accessory protein UreF, found in Pseudomonas paraeruginosa (strain DSM 24068 / PA7) (Pseudomonas aeruginosa (strain PA7)).